A 121-amino-acid polypeptide reads, in one-letter code: Large ribosomal subunit protein bL12 (121 aa).

The protein belongs to the bacterial ribosomal protein bL12 family. As to quaternary structure, homodimer. Part of the ribosomal stalk of the 50S ribosomal subunit. Forms a multimeric L10(L12)X complex, where L10 forms an elongated spine to which 2 to 4 L12 dimers bind in a sequential fashion. Binds GTP-bound translation factors.

Its function is as follows. Forms part of the ribosomal stalk which helps the ribosome interact with GTP-bound translation factors. Is thus essential for accurate translation. The polypeptide is Large ribosomal subunit protein bL12 (Streptococcus agalactiae serotype V (strain ATCC BAA-611 / 2603 V/R)).